The sequence spans 697 residues: Exocyst complex component 7 (697 aa).

Residues 1-384 (MIPPQEASAR…FSTVLTVFPI (384 aa)) form an SEC8 and ARHQ binding region. Coiled coils occupy residues 5 to 42 (QEASARRREIEDKLKQEEETLSFIRDSLEKSDQLTRNM) and 63 to 85 (VHKQTENLQRLQENVEKTLSCLD). The residue at position 133 (Ser133) is a Phosphoserine. Positions 238 to 270 (FRKSSSSSGVPYSPAIPNKRKDTPTKKPIKRPG) are disordered.

This sequence belongs to the EXO70 family. The exocyst complex is composed of EXOC1, EXOC2, EXOC3, EXOC4, EXOC5, EXOC6, EXOC7 and EXOC8. Interacts with RAB11FIP3. Interacts with ARHQ in a GTP-dependent manner.

It localises to the cytoplasm. The protein localises to the cytosol. Its subcellular location is the cell membrane. It is found in the midbody. The protein resides in the midbody ring. Functionally, component of the exocyst complex involved in the docking of exocytic vesicles with fusion sites on the plasma membrane. In adipocytes, plays a crucial role in targeting SLC2A4 vesicle to the plasma membrane in response to insulin, perhaps directing the vesicle to the precise site of fusion. It is required for neuron survival and plays an essential role in cortical development. The chain is Exocyst complex component 7 (Exoc7) from Mus musculus (Mouse).